Reading from the N-terminus, the 666-residue chain is Calmodulin-binding receptor kinase CaMRLK (666 aa).

Positions M1–S17 are cleaved as a signal peptide. Over D18–L297 the chain is Extracellular. Residues N27, N45, N52, N68, N78, N89, N110, N126, N137, N148, N154, N189, N212, N229, and N261 are each glycosylated (N-linked (GlcNAc...) asparagine). 7 LRR repeats span residues L79 to M103, G105 to G127, L130 to F152, T153 to G177, L178 to G197, L198 to H224, and Q226 to K246. A helical transmembrane segment spans residues V298–I318. Residues L319–N337 are calmodulin binding. The Cytoplasmic segment spans residues L319–R666. In terms of domain architecture, Protein kinase spans F395–I661. ATP contacts are provided by residues I401–L409 and K423.

Belongs to the protein kinase superfamily. Ser/Thr protein kinase family. In terms of assembly, binds calmodulin (CaM) in a calcium-dependent manner. Interacts with CAM1, but not with CAM8. Requires Mn(2+) as cofactor. The cofactor is Mg(2+). Calmodulin (CaM)-independent autophosphorylation. Expressed in reproductive and vegetative tissues, with higher levels in seedlings and flowers, but not in leaves.

It is found in the cell membrane. It carries out the reaction L-seryl-[protein] + ATP = O-phospho-L-seryl-[protein] + ADP + H(+). It catalyses the reaction L-threonyl-[protein] + ATP = O-phospho-L-threonyl-[protein] + ADP + H(+). With respect to regulation, not stimulated by calmodulin (CaM). Its function is as follows. Can phosphorylate the myelin basic protein in vitro. Required for endosperm development in embryos. Maybe involved in auxin and osmotic stress responses. The chain is Calmodulin-binding receptor kinase CaMRLK from Arabidopsis thaliana (Mouse-ear cress).